Here is a 343-residue protein sequence, read N- to C-terminus: Protein RecA (343 aa).

66–73 is a binding site for ATP; that stretch reads GPESSGKT.

It belongs to the RecA family.

The protein resides in the cytoplasm. Functionally, can catalyze the hydrolysis of ATP in the presence of single-stranded DNA, the ATP-dependent uptake of single-stranded DNA by duplex DNA, and the ATP-dependent hybridization of homologous single-stranded DNAs. It interacts with LexA causing its activation and leading to its autocatalytic cleavage. This is Protein RecA from Dechloromonas aromatica (strain RCB).